An 848-amino-acid polypeptide reads, in one-letter code: Aryl hydrocarbon receptor (848 aa).

Positions 1-9 are excised as a propeptide; that stretch reads MSSGANITY. The interval 1–38 is disordered; it reads MSSGANITYASRKRRKPVQKTVKPIPAEGIKSNPSKRH. 2 short sequence motifs (nuclear localization signal) span residues 12–15 and 36–41; these read RKRR and KRHRDR. One can recognise a bHLH domain in the interval 26–79; the sequence is PAEGIKSNPSKRHRDRLNTELDRLASLLPFPQDVINKLDKLSVLRLSVSYLRAK. A DNA-binding region spans residues 37–65; it reads RHRDRLNTELDRLASLLPFPQDVINKLDK. 3 required for maintaining the overall integrity of the AHR:ARNT heterodimer and its transcriptional activity regions span residues 49–81, 116–124, and 260–262; these read LASLLPFPQDVINKLDKLSVLRLSVSYLRAKSF, LLQALNGFV, and FAI. Residues 63-71 carry the Nuclear export signal motif; sequence LDKLSVLRL. One can recognise a PAS 1 domain in the interval 111–175; that stretch reads QEGEFLLQAL…AEFQRQLHWA (65 aa). The PAS 2 domain occupies 266 to 336; sequence LQPPSILEIR…CAESHIRMIK (71 aa). Residues 342–383 enclose the PAC domain; it reads MTVFRLLAKHSRWRWVQSNARLIYRNGRPDYIIVTQRPLTDE. A disordered region spans residues 421-449; sequence LPIRTKSNTSRKDWAPQSTPSKDSFHPSS. The span at 436 to 449 shows a compositional bias: polar residues; the sequence is PQSTPSKDSFHPSS.

As to quaternary structure, homodimer. Heterodimer; efficient DNA binding requires dimerization with another bHLH protein. Interacts with ARNT; the heterodimer ARNT:AHR binds to core DNA sequence 5'-TGCGTG-3' within the dioxin response element (DRE) of target gene promoters and activates their transcription. Binds MYBBP1A. Interacts with coactivators including SRC-1, RIP140 and NOCA7, and with the corepressor SMRT. Interacts with NEDD8 and IVNS1ABP. Interacts with BMAL1. Interacts with HSP90AB1. Interacts with TIPARP; leading to mono-ADP-ribosylation of AHR and subsequent inhibition of AHR. Post-translationally, mono-ADP-ribosylated, leading to inhibit transcription activator activity of AHR.

Its subcellular location is the cytoplasm. It localises to the nucleus. In terms of biological role, ligand-activated transcription factor that enables cells to adapt to changing conditions by sensing compounds from the environment, diet, microbiome and cellular metabolism, and which plays important roles in development, immunity and cancer. Upon ligand binding, translocates into the nucleus, where it heterodimerizes with ARNT and induces transcription by binding to xenobiotic response elements (XRE). Regulates a variety of biological processes, including angiogenesis, hematopoiesis, drug and lipid metabolism, cell motility and immune modulation. Xenobiotics can act as ligands: upon xenobiotic-binding, activates the expression of multiple phase I and II xenobiotic chemical metabolizing enzyme genes (such as the CYP1A1 gene). Mediates biochemical and toxic effects of halogenated aromatic hydrocarbons. Next to xenobiotics, natural ligands derived from plants, microbiota, and endogenous metabolism are potent AHR agonists. Tryptophan (Trp) derivatives constitute an important class of endogenous AHR ligands. Acts as a negative regulator of anti-tumor immunity: indoles and kynurenic acid generated by Trp catabolism act as ligand and activate AHR, thereby promoting AHR-driven cancer cell motility and suppressing adaptive immunity. Regulates the circadian clock by inhibiting the basal and circadian expression of the core circadian component PER1. Inhibits PER1 by repressing the CLOCK-BMAL1 heterodimer mediated transcriptional activation of PER1. The heterodimer ARNT:AHR binds to core DNA sequence 5'-TGCGTG-3' within the dioxin response element (DRE) of target gene promoters and activates their transcription. The chain is Aryl hydrocarbon receptor (Ahr) from Mus musculus castaneus (Southeastern Asian house mouse).